We begin with the raw amino-acid sequence, 192 residues long: Protein GrpE (192 aa).

Positions 1–34 (MSSKEQKTPNEQVSEEMENTAEQQVEATQETGEC) are disordered. The segment covering 20 to 31 (TAEQQVEATQET) has biased composition (polar residues).

It belongs to the GrpE family. In terms of assembly, homodimer.

It localises to the cytoplasm. Participates actively in the response to hyperosmotic and heat shock by preventing the aggregation of stress-denatured proteins, in association with DnaK and GrpE. It is the nucleotide exchange factor for DnaK and may function as a thermosensor. Unfolded proteins bind initially to DnaJ; upon interaction with the DnaJ-bound protein, DnaK hydrolyzes its bound ATP, resulting in the formation of a stable complex. GrpE releases ADP from DnaK; ATP binding to DnaK triggers the release of the substrate protein, thus completing the reaction cycle. Several rounds of ATP-dependent interactions between DnaJ, DnaK and GrpE are required for fully efficient folding. The sequence is that of Protein GrpE from Yersinia pestis.